Reading from the N-terminus, the 174-residue chain is MXVNFDETSKNNDKLSNNITDWQQNIEKSATSFLNHFIRISPKQNSNKKELLAPNQDIYLRENIRLRLQLAIMAVPRQQNELYKQSLEAVSSWVRSYFDTNAEVTQNFLKLVDGLTDTSIYVDVPEQLKSLTLLDKYLNRTALDVQKVEIEADKAIDTMPQVEAVKPTQSESQQ.

The protein to E.coli HemX C-terminal region.

This is an uncharacterized protein from Haemophilus influenzae (strain ATCC 51907 / DSM 11121 / KW20 / Rd).